The following is a 688-amino-acid chain: Complement C1s subcomponent (688 aa).

An N-terminal signal peptide occupies residues 1–15 (MWCFVFFSLLASFSA). The CUB 1 domain occupies 16 to 130 (EPTMYGEILS…TGFAAYYSAV (115 aa)). Ca(2+)-binding residues include Glu60, Asp68, Asp113, Asp131, Val132, and Glu134. Cys65 and Cys83 are disulfide-bonded. An EGF-like; calcium-binding domain is found at 131–172 (DVNECTDFTDVPCSHFCNNFIGGYFCSCPPEYFLHDDMRTCG). Disulfide bonds link Cys135–Cys147, Cys143–Cys156, and Cys158–Cys171. Asn149, Phe150, and Gly153 together coordinate Ca(2+). Asn149 is subject to (3R)-3-hydroxyasparagine. Asn174 carries an N-linked (GlcNAc...) asparagine glycan. A disulfide bridge connects residues Cys175 and Cys202. Residues 175–290 (CSGDVFTALI…KGWKLRYHGD (116 aa)) form the CUB 2 domain. Glu226, Asp236, Asp275, Gly278, and Gln279 together coordinate Ca(2+). An intrachain disulfide couples Cys234 to Cys251. Sushi domains lie at 292–356 (IPCP…ECQP) and 357–423 (VDCG…KCIP). Cystine bridges form between Cys294/Cys341, Cys321/Cys354, Cys359/Cys403, Cys386/Cys421, Cys425/Cys549, Cys595/Cys618, and Cys627/Cys659. N-linked (GlcNAc...) asparagine glycosylation occurs at Asn406. The 243-residue stretch at 438–680 (IFGGYSTKIQ…YVDWILKTMQ (243 aa)) folds into the Peptidase S1 domain. Residues His475 and Asp529 each act as charge relay system in the active site. Catalysis depends on Ser631, which acts as the Charge relay system.

The protein belongs to the peptidase S1 family. As to quaternary structure, core component of the complement C1 complex, a calcium-dependent complex composed of 1 molecule of the C1Q subcomplex, 2 molecules of C1R and 2 molecules of C1S. The C1Q subcomplex is composed 18 subunits: 3 chains of C1QA, C1QB, and C1QC trimerize to form 6 collagen-like triple helices connected to six globular ligand-recognition modules. Cleaved and activated by C1R to generate Complement C1s subcomponent heavy and light chains. In terms of processing, the iron and 2-oxoglutarate dependent 3-hydroxylation of aspartate and asparagine is (R) stereospecific within EGF domains.

The protein localises to the secreted. It localises to the cell surface. The catalysed reaction is Cleavage of Arg-|-Ala bond in complement component C4 to form C4a and C4b, and Lys(or Arg)-|-Lys bond in complement component C2 to form C2a and C2b: the 'classical' pathway C3 convertase.. With respect to regulation, cleaved and activated by C1R. Immunoglobulin-binding promotes autoactivation of C1R, which results in the cleavage of the Arg-Ile bond in the catalytic domain. Inhibited by C1 inhibitor (SERPING1). Component of the complement C1 complex, a multiprotein complex that initiates the classical pathway of the complement system, a cascade of proteins that leads to phagocytosis and breakdown of pathogens and signaling that strengthens the adaptive immune system. C1S is activated following association of the C1 complex with immunoglobulins (IgG or IgM) complexed with antigens to form antigen-antibody complexes on the surface of pathogens. C1S is cleaved and activated by C1R to generate C1s subcomponent heavy and light chains. C1s subcomponent light chain then cleaves and activates C2 and C4, the next components of the classical complement pathway. Its function is as follows. Serine protease component of the complement C1 complex, which catalyzes cleavage and activation of C2 and C4, the next components of the classical complement pathway. Also cleaves IGFBP5 and thereby inhibits the trophic effects of IGF1. This Rattus norvegicus (Rat) protein is Complement C1s subcomponent.